Reading from the N-terminus, the 134-residue chain is Neuropeptide-like peptide 11 (134 aa).

An N-terminal signal peptide occupies residues 1-20 (MMSTLALVSLAIFGIAVVCA). Residues 21-106 (APKPATVPVA…YNRLIDAGKK (86 aa)) constitute a propeptide that is removed on maturation. At Ala131 the chain carries Alanine amide.

The sequence is that of Neuropeptide-like peptide 11 (nlp-11) from Caenorhabditis elegans.